The following is a 188-amino-acid chain: MIRLTQRLTTEESAGKTLFTTLTLPIDLRIKSRLKVTLDNGDAAGLFLTRGQLLRGGECLTDDAGAVVVMVKAAEEQVSTVRCDDLLLLSRICYHLGNRHVPLQIEAGFARYQHDYVLDEMVVGLGGSVVVELAPFEPEAGAYQSQAGAGHHHHHDHDHGHSHDHSHTHSHADSAATAVPMHGFLKTS.

Positions 142-174 (AYQSQAGAGHHHHHDHDHGHSHDHSHTHSHADS) are disordered. Residues 157-172 (HDHGHSHDHSHTHSHA) are compositionally biased toward basic and acidic residues.

It belongs to the UreE family.

Its subcellular location is the cytoplasm. Involved in urease metallocenter assembly. Binds nickel. Probably functions as a nickel donor during metallocenter assembly. The protein is Urease accessory protein UreE of Tolumonas auensis (strain DSM 9187 / NBRC 110442 / TA 4).